Here is a 37-residue protein sequence, read N- to C-terminus: Large ribosomal subunit protein bL36 (37 aa).

Belongs to the bacterial ribosomal protein bL36 family.

This Variovorax paradoxus (strain S110) protein is Large ribosomal subunit protein bL36.